An 800-amino-acid chain; its full sequence is Nuclear poly(A) polymerase 2 (800 aa).

Residues 103-105, 115-118, D171, K232, Y241, and 250-251 contribute to the ATP site; these read FGS, ADID, and GV. 3 residues coordinate Mg(2+): D116, D118, and D171. 2 consecutive short sequence motifs (nuclear localization signal) follow at residues 487-494 and 533-540; these read RRRQLPSF and KRKNDDEI. The disordered stretch occupies residues 497–576; sequence PNGYKRSRQS…SGITTSGTPQ (80 aa). Positions 527 to 538 are enriched in basic and acidic residues; the sequence is SVERYAKRKNDD. A compositionally biased stretch (polar residues) spans 564-575; sequence PDSSGITTSGTP.

Belongs to the poly(A) polymerase family. As to quaternary structure, monomer. Forms a complex with cleavage and polyadenylation specificity factor (CPSF) subunits CPSF100, CPSF30, FIPS5 and PABN2. It depends on Mg(2+) as a cofactor. Mn(2+) serves as cofactor. As to expression, mostly expressed in flowers (highly in the style, receptacle and pedicel, but weakly in the vasculature of sepals) and hypocotyls, and, to a lower extent, in roots and stems. Barely detected in leaves (petioles and vascular system).

The protein localises to the nucleus. It is found in the cytoplasm. The enzyme catalyses RNA(n) + ATP = RNA(n)-3'-adenine ribonucleotide + diphosphate. Functionally, essential protein. Polymerase that creates the 3'-poly(A) tail of mRNA's. Also required for the endoribonucleolytic cleavage reaction at some polyadenylation sites. May acquire specificity through interaction with a cleavage and polyadenylation specificity factor (CPSF) at its C-terminus. Mediates the polyadenylation of RNAs that are associated with polynucleotide phosphorylase (e.g. PNP1). The protein is Nuclear poly(A) polymerase 2 of Arabidopsis thaliana (Mouse-ear cress).